We begin with the raw amino-acid sequence, 1240 residues long: RNA-directed RNA polymerase VP2 (1240 aa).

Positions Leu516–Ile764 constitute a RdRp catalytic domain.

It belongs to the reoviridae RNA-directed RNA polymerase family.

The protein resides in the virion. It carries out the reaction RNA(n) + a ribonucleoside 5'-triphosphate = RNA(n+1) + diphosphate. Its function is as follows. RNA-directed RNA polymerase that is involved in transcription and genome replication. Following infection, it catalyzes the synthesis of fully conservative plus strands. After core assembly, which consists in recruitment of one capped plus-strand for each genomic segments and polymerase complexes, the polymerase switches mode and catalyzes the synthesis of complementary minus-strands. The sequence is that of RNA-directed RNA polymerase VP2 (S2) from Oncorhynchus keta (Chum salmon).